The following is a 730-amino-acid chain: Exostosin-1a (730 aa).

Residues 1 to 6 (MQAKKR) lie on the Cytoplasmic side of the membrane. A helical; Signal-anchor for type II membrane protein transmembrane segment spans residues 7 to 27 (YLILFSAGVCLILLFYLQGPA). Residues 28 to 730 (SRRTPKRGDD…RKKYRDIERL (703 aa)) are Lumenal-facing. N-linked (GlcNAc...) asparagine glycosylation occurs at N314. Residues R533, D549, E550, D551, E637, D638, and R685 each coordinate UDP-N-acetyl-alpha-D-glucosamine. D551 is a Mn(2+) binding site. C636 and C688 form a disulfide bridge. D638 is a catalytic residue.

Belongs to the glycosyltransferase 47 family. Requires Mn(2+) as cofactor.

It is found in the endoplasmic reticulum membrane. It catalyses the reaction 3-O-{[(1-&gt;4)-beta-D-GlcA-(1-&gt;4)-alpha-D-GlcNAc](n)-(1-&gt;4)-beta-D-GlcA-(1-&gt;3)-beta-D-Gal-(1-&gt;3)-beta-D-Gal-(1-&gt;4)-beta-D-Xyl}-L-seryl-[protein] + UDP-N-acetyl-alpha-D-glucosamine = 3-O-{alpha-D-GlcNAc-[(1-&gt;4)-beta-D-GlcA-(1-&gt;4)-alpha-D-GlcNAc](n)-(1-&gt;4)-beta-D-GlcA-(1-&gt;3)-beta-D-Gal-(1-&gt;3)-beta-D-Gal-(1-&gt;4)-beta-D-Xyl}-L-seryl-[protein] + UDP + H(+). It carries out the reaction 3-O-{alpha-D-GlcNAc-[(1-&gt;4)-beta-D-GlcA-(1-&gt;4)-alpha-D-GlcNAc](n)-(1-&gt;4)-beta-D-GlcA-(1-&gt;3)-beta-D-Gal-(1-&gt;3)-beta-D-Gal-(1-&gt;4)-beta-D-Xyl}-L-seryl-[protein] + UDP-alpha-D-glucuronate = 3-O-{[(1-&gt;4)-beta-D-GlcA-(1-&gt;4)-alpha-D-GlcNAc](n+1)-(1-&gt;4)-beta-D-GlcA-(1-&gt;3)-beta-D-Gal-(1-&gt;3)-beta-D-Gal-(1-&gt;4)-beta-D-Xyl}-L-seryl-[protein] + UDP + H(+). Its pathway is protein modification; protein glycosylation. Functionally, glycosyltransferase required for the biosynthesis of heparan-sulfate. This is Exostosin-1a (ext1a) from Danio rerio (Zebrafish).